Reading from the N-terminus, the 128-residue chain is Large ribosomal subunit protein bL17 (128 aa).

Belongs to the bacterial ribosomal protein bL17 family. As to quaternary structure, part of the 50S ribosomal subunit. Contacts protein L32.

This chain is Large ribosomal subunit protein bL17, found in Pseudomonas fluorescens (strain ATCC BAA-477 / NRRL B-23932 / Pf-5).